Here is a 1371-residue protein sequence, read N- to C-terminus: DNA-directed RNA polymerase subunit beta'' (1371 aa).

Positions 220, 293, 300, and 303 each coordinate Zn(2+).

It belongs to the RNA polymerase beta' chain family. RpoC2 subfamily. As to quaternary structure, in plastids the minimal PEP RNA polymerase catalytic core is composed of four subunits: alpha, beta, beta', and beta''. When a (nuclear-encoded) sigma factor is associated with the core the holoenzyme is formed, which can initiate transcription. Zn(2+) is required as a cofactor.

The protein localises to the plastid. It localises to the chloroplast. It carries out the reaction RNA(n) + a ribonucleoside 5'-triphosphate = RNA(n+1) + diphosphate. Its function is as follows. DNA-dependent RNA polymerase catalyzes the transcription of DNA into RNA using the four ribonucleoside triphosphates as substrates. The chain is DNA-directed RNA polymerase subunit beta'' from Lobularia maritima (Sweet alyssum).